The primary structure comprises 263 residues: N-acyl homoserine lactonase AttM (263 aa).

Zn(2+)-binding residues include H103, H105, D107, H108, H180, D202, and H247.

The protein belongs to the metallo-beta-lactamase superfamily. The cofactor is Zn(2+).

It carries out the reaction an N-acyl-L-homoserine lactone + H2O = an N-acyl-L-homoserine + H(+). The protein is N-acyl homoserine lactonase AttM (attM) of Rhizobium radiobacter (Agrobacterium tumefaciens).